A 334-amino-acid chain; its full sequence is MKPPPRRRAAPARYLGEVTGPATWSAREKRQLVRLLQARQGQPEPDATELARELRGRSEAEIRVFLQQLKGRVAREAIQKVHPGGLQGPRRREAQPPAPIEVWTDLAEKITGPLEEALAVAFSQVLTIAATEPVTLLHSKPPKPTQARGKPLLLSAPGGQEDPAPEIPSSAPAAPSSAPRTPDPAPEKPSESSAGPSTEEDFAVDFEKIYKYLSSVSRSGRSPELSAAESAVVLDLLMSLPEELPLLPCTALVEHMTETYLRLTAPQPIPAGGSLGPAAEGDGAGSKAPEETPPATEKAEHSELKSPWQAAGICPLNPFLVPLELLGRAATPAR.

2 disordered regions span residues 137 to 200 (LHSK…STEE) and 271 to 306 (AGGS…ELKS). Residues 167-180 (IPSSAPAAPSSAPR) show a composition bias toward low complexity.

Part of the SNAPc complex composed of 5 subunits: SNAPC1, SNAPC2, SNAPC3, SNAPC4 and SNAPC5. SNAPC2 interacts with TBP and SNAPC4.

It localises to the nucleus. Functionally, part of the SNAPc complex required for the transcription of both RNA polymerase II and III small-nuclear RNA genes. Binds to the proximal sequence element (PSE), a non-TATA-box basal promoter element common to these 2 types of genes. Recruits TBP and BRF2 to the U6 snRNA TATA box. The protein is snRNA-activating protein complex subunit 2 (SNAPC2) of Homo sapiens (Human).